Reading from the N-terminus, the 540-residue chain is Chaperonin GroEL (540 aa).

ATP is bound by residues 29–32, 86–90, glycine 413, 476–478, and aspartate 492; these read TLGP, DGTTT, and NAA.

The protein belongs to the chaperonin (HSP60) family. In terms of assembly, forms a cylinder of 14 subunits composed of two heptameric rings stacked back-to-back. Interacts with the co-chaperonin GroES.

The protein resides in the cytoplasm. It catalyses the reaction ATP + H2O + a folded polypeptide = ADP + phosphate + an unfolded polypeptide.. Its function is as follows. Together with its co-chaperonin GroES, plays an essential role in assisting protein folding. The GroEL-GroES system forms a nano-cage that allows encapsulation of the non-native substrate proteins and provides a physical environment optimized to promote and accelerate protein folding. In Streptococcus sanguinis, this protein is Chaperonin GroEL.